The primary structure comprises 396 residues: Inositol hexakisphosphate kinase 3 (396 aa).

206 to 214 contacts substrate; that stretch reads PCILDLKMG.

This sequence belongs to the inositol phosphokinase (IPK) family. Highly expressed in cerebellum, brain cortex, kidney, thymus and lung. Detected at lower levels in hippocampus, testis, heart and olfactory bulb.

The protein resides in the cytoplasm. The catalysed reaction is 1D-myo-inositol hexakisphosphate + ATP = 5-diphospho-1D-myo-inositol 1,2,3,4,6-pentakisphosphate + ADP. It carries out the reaction 1-diphospho-1D-myo-inositol 2,3,4,5,6-pentakisphosphate + ATP + H(+) = 1,5-bis(diphospho)-1D-myo-inositol 2,3,4,6-tetrakisphosphate + ADP. In terms of biological role, converts inositol hexakisphosphate (InsP6) to diphosphoinositol pentakisphosphate (InsP7/PP-InsP5). Converts 1,3,4,5,6-pentakisphosphate (InsP5) to PP-InsP4. This Mus musculus (Mouse) protein is Inositol hexakisphosphate kinase 3 (Ip6k3).